Reading from the N-terminus, the 349-residue chain is Flagellar P-ring protein (349 aa).

The first 16 residues, 1-16, serve as a signal peptide directing secretion; it reads MKYFFIIALLLSSLYS.

Belongs to the FlgI family. The basal body constitutes a major portion of the flagellar organelle and consists of four rings (L,P,S, and M) mounted on a central rod.

It localises to the periplasm. The protein resides in the bacterial flagellum basal body. Assembles around the rod to form the L-ring and probably protects the motor/basal body from shearing forces during rotation. This chain is Flagellar P-ring protein, found in Aliarcobacter butzleri (strain RM4018) (Arcobacter butzleri).